The sequence spans 206 residues: Large ribosomal subunit protein uL4 (206 aa).

This sequence belongs to the universal ribosomal protein uL4 family. Part of the 50S ribosomal subunit.

One of the primary rRNA binding proteins, this protein initially binds near the 5'-end of the 23S rRNA. It is important during the early stages of 50S assembly. It makes multiple contacts with different domains of the 23S rRNA in the assembled 50S subunit and ribosome. Its function is as follows. Forms part of the polypeptide exit tunnel. This is Large ribosomal subunit protein uL4 from Cereibacter sphaeroides (strain ATCC 17025 / ATH 2.4.3) (Rhodobacter sphaeroides).